A 138-amino-acid polypeptide reads, in one-letter code: Large ribosomal subunit protein bL17 (138 aa).

Belongs to the bacterial ribosomal protein bL17 family. In terms of assembly, part of the 50S ribosomal subunit. Contacts protein L32.

The polypeptide is Large ribosomal subunit protein bL17 (Bradyrhizobium diazoefficiens (strain JCM 10833 / BCRC 13528 / IAM 13628 / NBRC 14792 / USDA 110)).